We begin with the raw amino-acid sequence, 900 residues long: Translation initiation factor IF-2 (900 aa).

The segment covering 80 to 95 (LEEQSRKTVEKEDQLR) has biased composition (basic and acidic residues). Disordered stretches follow at residues 80 to 106 (LEEQ…VPGR), 149 to 169 (AVEA…DSPV), and 221 to 268 (DEFD…VDEK). Positions 253-262 (GKKKGKKKKK) are enriched in basic residues. The tr-type G domain maps to 397–567 (TRPPVVTIMG…LTEAEVRELK (171 aa)). Positions 406–413 (GHVDHGKT) are G1. GTP is bound at residue 406–413 (GHVDHGKT). The G2 stretch occupies residues 431-435 (GITQH). The interval 453–456 (DTPG) is G3. Residues 453-457 (DTPGH) and 507-510 (NKID) each bind GTP. Positions 507 to 510 (NKID) are G4. The interval 543-545 (SAK) is G5.

The protein belongs to the TRAFAC class translation factor GTPase superfamily. Classic translation factor GTPase family. IF-2 subfamily.

The protein resides in the cytoplasm. In terms of biological role, one of the essential components for the initiation of protein synthesis. Protects formylmethionyl-tRNA from spontaneous hydrolysis and promotes its binding to the 30S ribosomal subunits. Also involved in the hydrolysis of GTP during the formation of the 70S ribosomal complex. The chain is Translation initiation factor IF-2 from Chlorobium phaeovibrioides (strain DSM 265 / 1930) (Prosthecochloris vibrioformis (strain DSM 265)).